The primary structure comprises 81 residues: Acyl carrier protein (81 aa).

Residues 2-80 form the Carrier domain; it reads SKVDNIEQKV…DVVNYIKEHK (79 aa). An O-(pantetheine 4'-phosphoryl)serine modification is found at Ser-40.

It belongs to the acyl carrier protein (ACP) family. In terms of processing, 4'-phosphopantetheine is transferred from CoA to a specific serine of apo-ACP by AcpS. This modification is essential for activity because fatty acids are bound in thioester linkage to the sulfhydryl of the prosthetic group.

It localises to the cytoplasm. Its pathway is lipid metabolism; fatty acid biosynthesis. In terms of biological role, carrier of the growing fatty acid chain in fatty acid biosynthesis. This Rickettsia bellii (strain OSU 85-389) protein is Acyl carrier protein.